A 458-amino-acid polypeptide reads, in one-letter code: tRNA modification GTPase MnmE (458 aa).

Residues arginine 22, glutamate 86, and arginine 125 each contribute to the (6S)-5-formyl-5,6,7,8-tetrahydrofolate site. A TrmE-type G domain is found at 221-379 (GIRTVILGRP…LEQTITEMFF (159 aa)). K(+) is bound at residue asparagine 231. GTP contacts are provided by residues 231 to 236 (NAGKSS), 250 to 256 (TEIAGTT), and 275 to 278 (DTAG). Serine 235 contributes to the Mg(2+) binding site. 3 residues coordinate K(+): threonine 250, isoleucine 252, and threonine 255. Threonine 256 serves as a coordination point for Mg(2+). (6S)-5-formyl-5,6,7,8-tetrahydrofolate is bound at residue lysine 458.

The protein belongs to the TRAFAC class TrmE-Era-EngA-EngB-Septin-like GTPase superfamily. TrmE GTPase family. As to quaternary structure, homodimer. Heterotetramer of two MnmE and two MnmG subunits. K(+) serves as cofactor.

It is found in the cytoplasm. Functionally, exhibits a very high intrinsic GTPase hydrolysis rate. Involved in the addition of a carboxymethylaminomethyl (cmnm) group at the wobble position (U34) of certain tRNAs, forming tRNA-cmnm(5)s(2)U34. This is tRNA modification GTPase MnmE from Lachnoclostridium phytofermentans (strain ATCC 700394 / DSM 18823 / ISDg) (Clostridium phytofermentans).